We begin with the raw amino-acid sequence, 196 residues long: Beta-crystallin A4 (196 aa).

Threonine 2 bears the N-acetylthreonine mark. Residues 2-11 (TLQCTKSAGH) form an N-terminal arm region. Beta/gamma crystallin 'Greek key' domains lie at 12–51 (WRMV…KVLS) and 52–98 (GAWV…RPVA). Residues 99–104 (CANHRD) form a connecting peptide region. Beta/gamma crystallin 'Greek key' domains follow at residues 105-146 (SRLT…HVQS) and 147-195 (GAWV…RRIQ).

This sequence belongs to the beta/gamma-crystallin family. In terms of assembly, homo/heterodimer, or complexes of higher-order. The structure of beta-crystallin oligomers seems to be stabilized through interactions between the N-terminal arms.

In terms of biological role, crystallins are the dominant structural components of the vertebrate eye lens. In Mus musculus (Mouse), this protein is Beta-crystallin A4 (Cryba4).